The chain runs to 641 residues: Threonine--tRNA ligase (641 aa).

One can recognise a TGS domain in the interval 1–61 (MIKISFFDNQ…KKNGNLEILT (61 aa)). The catalytic stretch occupies residues 240 to 538 (DHKKINKELD…LVEETKGVFP (299 aa)). The Zn(2+) site is built by C334, H385, and H515.

Belongs to the class-II aminoacyl-tRNA synthetase family. In terms of assembly, homodimer. It depends on Zn(2+) as a cofactor.

It is found in the cytoplasm. The catalysed reaction is tRNA(Thr) + L-threonine + ATP = L-threonyl-tRNA(Thr) + AMP + diphosphate + H(+). Functionally, catalyzes the attachment of threonine to tRNA(Thr) in a two-step reaction: L-threonine is first activated by ATP to form Thr-AMP and then transferred to the acceptor end of tRNA(Thr). Also edits incorrectly charged L-seryl-tRNA(Thr). This chain is Threonine--tRNA ligase, found in Aster yellows witches'-broom phytoplasma (strain AYWB).